A 67-amino-acid chain; its full sequence is MRSLYLSFSLTIIFVLVIMHAEAKAISEPNAIAEADPGIFSALKTLGKILLPVILPTVAEKIKEKVG.

Positions 1–25 (MRSLYLSFSLTIIFVLVIMHAEAKA) are cleaved as a signal peptide. The propeptide occupies 26–37 (ISEPNAIAEADP). Residue Val66 is modified to Valine amide.

Belongs to the formicidae venom clade 3 family. In terms of tissue distribution, expressed by the venom gland.

The protein localises to the secreted. In terms of biological role, toxin that causes a rapid and irreversible paralysis when intrathoracically injected into insects (blowflies). Does not cause spontaneous nocifensive behaviors by intraplantar injection in mice. Exhibits hemolytic and cytotoxic activities on HEK293 cells. The protein is Myrmicitoxin(1)-Pm6a of Pogonomyrmex maricopa (Maricopa harvester ant).